The sequence spans 361 residues: Peptide chain release factor 1 (361 aa).

Residue Gln235 is modified to N5-methylglutamine.

It belongs to the prokaryotic/mitochondrial release factor family. In terms of processing, methylated by PrmC. Methylation increases the termination efficiency of RF1.

It localises to the cytoplasm. In terms of biological role, peptide chain release factor 1 directs the termination of translation in response to the peptide chain termination codons UAG and UAA. This chain is Peptide chain release factor 1, found in Rhodopseudomonas palustris (strain ATCC BAA-98 / CGA009).